The following is a 121-amino-acid chain: Small ribosomal subunit protein uS13 (121 aa).

Residues Arg-93–Lys-121 are disordered.

The protein belongs to the universal ribosomal protein uS13 family. Part of the 30S ribosomal subunit. Forms a loose heterodimer with protein S19. Forms two bridges to the 50S subunit in the 70S ribosome.

Located at the top of the head of the 30S subunit, it contacts several helices of the 16S rRNA. In the 70S ribosome it contacts the 23S rRNA (bridge B1a) and protein L5 of the 50S subunit (bridge B1b), connecting the 2 subunits; these bridges are implicated in subunit movement. Contacts the tRNAs in the A and P-sites. The sequence is that of Small ribosomal subunit protein uS13 from Methylibium petroleiphilum (strain ATCC BAA-1232 / LMG 22953 / PM1).